The sequence spans 266 residues: Gasdermin bGSDM (266 aa).

C4 carries S-palmitoyl cysteine lipidation. 4 consecutive transmembrane segments (beta stranded) span residues 69 to 85 (INGQ…GINI), 97 to 114 (AGIE…FEFS), 163 to 180 (EFTV…QLDV), and 189 to 205 (GKLK…TVTY). The C-terminal region stretch occupies residues 238 to 266 (AMALDAAGGVMPSDSALLDEGGLLDLEGF).

It belongs to the bacterial gasdermin family. As to quaternary structure, monomer in solution. Homooligomer; forms homooligomeric ring-shaped pores when inserted in membranes with 48-54 subunits per ring. Palmitoylation helps stabilize the inactive state; may self palmitoylate. Palmitoylation plays a significant role in pore formation.

Its subcellular location is the cytoplasm. The protein localises to the cell inner membrane. With respect to regulation, the full-length protein before cleavage is inactive: intramolecular interactions between the N-terminal domain and the C-terminal region as well as the lipid modification, mediate autoinhibition. The pyroptosis-like-inducing activity is carried by the released N-terminal domain (Gasdermin bGSDM, N-terminus). Precursor of a pore-forming protein involved in defense against bacteriophages. Expression of bGSDM and the neighboring protease gene (Ga0334635_1659) is toxic in E.coli. Cleavage of this precursor by its dedicated protease releases the active moiety (gasdermin bGSDM, N-terminus) which inserts into membranes, forming pores and triggering cell death. Its function is as follows. Pore-forming protein that causes membrane permeabilization, probably via a pyroptosis-like activity. Makes ring-like pores with an interior pore diameter of 200-300 Angstroms, when integrated in liposomes. The sequence is that of Gasdermin bGSDM from Vitiosangium sp. (strain GDMCC 1.1324).